A 452-amino-acid polypeptide reads, in one-letter code: MSKITKVFAREILDSRGNPTIQVDVYTLAGGFGSAIVPSGASTGSREALELRDTNTKYADNWYGQKGVMTAVDNVNNIIAPEIIGLCCKNQRLVDQKMIELDGTPNKEKLGANAILGVSLAVAKAAANELRMPLFRYLGGTNPTLMPVPMLNVINGGEHASNTLDFQEFMIMPLGFRTFKEALQAANKVFHNLAKLLKKSGFETQVGDEGGFAPNFNSHEQALDFLVDAIKESGFNPGFKGENAVAIAIDAAASDFYNGQKYVFKKLMAASLSKNQADLDEKFEFSSEELLNYYGQLLAKYPIISIEDGFAESDWQGFIAFNQKYGNNHQIVGDDLTVTNVEILKKAINLKAINSILIKLNQIGTLSETLDAIHLAQKSGMTAVISHRSGESEDTTIADLAVAVSSGQIKTGSLSRTDRIAKYNRLLVIEEYLNSYAKADYIGREVFYNLKK.

Residue Q167 participates in (2R)-2-phosphoglycerate binding. The active-site Proton donor is the E209. Mg(2+)-binding residues include D250, E307, and D334. Positions 359, 388, 389, and 410 each coordinate (2R)-2-phosphoglycerate. K359 acts as the Proton acceptor in catalysis.

Belongs to the enolase family. It depends on Mg(2+) as a cofactor.

Its subcellular location is the cytoplasm. It localises to the secreted. The protein localises to the cell surface. It carries out the reaction (2R)-2-phosphoglycerate = phosphoenolpyruvate + H2O. It participates in carbohydrate degradation; glycolysis; pyruvate from D-glyceraldehyde 3-phosphate: step 4/5. Functionally, catalyzes the reversible conversion of 2-phosphoglycerate (2-PG) into phosphoenolpyruvate (PEP). It is essential for the degradation of carbohydrates via glycolysis. The chain is Enolase from Mesomycoplasma hyopneumoniae (strain 7448) (Mycoplasma hyopneumoniae).